The chain runs to 184 residues: Putative NAD(P)H nitroreductase HI_1542 (184 aa).

Residues 10–12 (RKS), Arg-35, and His-39 each bind FMN. 122–127 (AAQAQG) is a binding site for NAD(+). Residue 132–134 (WIS) participates in FMN binding.

This sequence belongs to the nitroreductase family. As to quaternary structure, homodimer. The cofactor is FMN.

This is Putative NAD(P)H nitroreductase HI_1542 from Haemophilus influenzae (strain ATCC 51907 / DSM 11121 / KW20 / Rd).